We begin with the raw amino-acid sequence, 1201 residues long: Putative disease resistance protein At4g19050 (1201 aa).

33–40 (GEAGIGKT) provides a ligand contact to ATP. 14 LRR repeats span residues 469 to 491 (KLRV…SGLQ), 492 to 514 (GLHV…FFKN), 517 to 539 (QLQS…EKLS), 540 to 562 (MLRC…IVET), 680 to 701 (ELRI…IADV), 703 to 725 (NLNK…EKLT), 726 to 748 (HLEV…FGEM), 750 to 771 (YLHE…ISEL), 773 to 795 (NLKE…EKLT), 796 to 818 (NLEI…FENL), 820 to 841 (CLHK…ISEL), 843 to 865 (NLKE…EKLT), 866 to 888 (HLVI…FESM), and 890 to 911 (YLCE…PKQS). The span at 1162–1180 (DEPRIGARITDEISEDQPH) shows a compositional bias: basic and acidic residues. Residues 1162–1201 (DEPRIGARITDEISEDQPHKNTIGPETQTPTQPTKATDTV) form a disordered region. The segment covering 1185–1201 (GPETQTPTQPTKATDTV) has biased composition (polar residues).

It belongs to the disease resistance NB-LRR family.

Its function is as follows. Potential disease resistance protein. The protein is Putative disease resistance protein At4g19050 of Arabidopsis thaliana (Mouse-ear cress).